A 737-amino-acid chain; its full sequence is Elongation factor 2 (737 aa).

Positions 18 to 262 (TRVRNIGIIA…TVIKFVPNPR (245 aa)) constitute a tr-type G domain. GTP is bound by residues 27–34 (AHVDHGKT), 93–97 (DTPGH), and 147–150 (NKVD). His604 is modified (diphthamide).

It belongs to the TRAFAC class translation factor GTPase superfamily. Classic translation factor GTPase family. EF-G/EF-2 subfamily.

It is found in the cytoplasm. Catalyzes the GTP-dependent ribosomal translocation step during translation elongation. During this step, the ribosome changes from the pre-translocational (PRE) to the post-translocational (POST) state as the newly formed A-site-bound peptidyl-tRNA and P-site-bound deacylated tRNA move to the P and E sites, respectively. Catalyzes the coordinated movement of the two tRNA molecules, the mRNA and conformational changes in the ribosome. This is Elongation factor 2 (fusA) from Sulfurisphaera tokodaii (strain DSM 16993 / JCM 10545 / NBRC 100140 / 7) (Sulfolobus tokodaii).